The chain runs to 160 residues: M-phase phosphoprotein 6 (160 aa).

Glycyl lysine isopeptide (Lys-Gly) (interchain with G-Cter in SUMO2) cross-links involve residues Lys-37 and Lys-86. Ser-110 is subject to Phosphoserine. A Nuclear localization signal motif is present at residues 116–133 (RRYETLVGTIGKKFARKR). A Glycyl lysine isopeptide (Lys-Gly) (interchain with G-Cter in SUMO2) cross-link involves residue Lys-127. Residue Thr-147 is modified to Phosphothreonine. Glycyl lysine isopeptide (Lys-Gly) (interchain with G-Cter in SUMO2) cross-links involve residues Lys-150 and Lys-153.

This sequence belongs to the MPP6 family. In terms of assembly, associates with the RNA exosome complex, mediated by EXOSC3. Interacts with ARHGAP18. Interacts with exosome cofactors EXOSC10 and MTREX. In terms of processing, phosphorylated in M (mitotic) phase.

It is found in the nucleus. The protein localises to the nucleolus. Its subcellular location is the cytoplasm. Functionally, RNA-binding protein that associates with the RNA exosome complex. Involved in the 3'-processing of the 7S pre-RNA to the mature 5.8S rRNA and play a role in recruiting the RNA exosome complex to pre-rRNA; this function may include C1D. This chain is M-phase phosphoprotein 6, found in Homo sapiens (Human).